A 722-amino-acid chain; its full sequence is Polyribonucleotide nucleotidyltransferase (722 aa).

Asp-495 and Asp-501 together coordinate Mg(2+). A KH domain is found at Pro-561 to Ile-620. Residues Gly-630–Lys-700 form the S1 motif domain.

Belongs to the polyribonucleotide nucleotidyltransferase family. Mg(2+) is required as a cofactor.

It is found in the cytoplasm. It carries out the reaction RNA(n+1) + phosphate = RNA(n) + a ribonucleoside 5'-diphosphate. In terms of biological role, involved in mRNA degradation. Catalyzes the phosphorolysis of single-stranded polyribonucleotides processively in the 3'- to 5'-direction. The sequence is that of Polyribonucleotide nucleotidyltransferase from Chromobacterium violaceum (strain ATCC 12472 / DSM 30191 / JCM 1249 / CCUG 213 / NBRC 12614 / NCIMB 9131 / NCTC 9757 / MK).